Reading from the N-terminus, the 305-residue chain is Coiled-coil domain-containing protein 83 (305 aa).

Residues 1 to 25 are disordered; sequence MDSSAKGSKKDAPDGPPKDSKLPVS. Basic and acidic residues predominate over residues 8-21; sequence SKKDAPDGPPKDSK. Positions 37 to 186 form a coiled coil; the sequence is ENAVERFMFH…LEDEKKRISR (150 aa).

This chain is Coiled-coil domain-containing protein 83 (Ccdc83), found in Mus musculus (Mouse).